The chain runs to 249 residues: Isoprenyl transferase (249 aa).

The active site involves Asp25. A Mg(2+)-binding site is contributed by Asp25. Substrate-binding positions include 26 to 29 (GNGR), Trp30, Arg38, His42, and 70 to 72 (STE). The active-site Proton acceptor is Asn73. Residues Trp74, Arg76, Arg197, and 203–205 (RLS) each bind substrate. Glu216 lines the Mg(2+) pocket.

The protein belongs to the UPP synthase family. As to quaternary structure, homodimer. The cofactor is Mg(2+).

In terms of biological role, catalyzes the condensation of isopentenyl diphosphate (IPP) with allylic pyrophosphates generating different type of terpenoids. This chain is Isoprenyl transferase, found in Streptococcus mutans serotype c (strain ATCC 700610 / UA159).